The following is a 187-amino-acid chain: Ribosome maturation factor RimM (187 aa).

The 75-residue stretch at 94-168 (DDEFYHADLV…RVIVDMPDGL (75 aa)) folds into the PRC barrel domain. The tract at residues 167–187 (GLIGGDKPDTSDTAPLGQDFD) is disordered.

It belongs to the RimM family. As to quaternary structure, binds ribosomal protein uS19.

The protein resides in the cytoplasm. Its function is as follows. An accessory protein needed during the final step in the assembly of 30S ribosomal subunit, possibly for assembly of the head region. Essential for efficient processing of 16S rRNA. May be needed both before and after RbfA during the maturation of 16S rRNA. It has affinity for free ribosomal 30S subunits but not for 70S ribosomes. The polypeptide is Ribosome maturation factor RimM (Jannaschia sp. (strain CCS1)).